The chain runs to 1693 residues: Latrophilin Cirl (1693 aa).

Residues 1–753 lie on the Extracellular side of the membrane; it reads MLPTILSISY…LFTMFDGNMR (753 aa). Residues 25–114 enclose the SUEL-type lectin domain; that stretch reads ACEGKKLTIE…KYLEAHYQCI (90 aa). Asn-142 carries N-linked (GlcNAc...) asparagine glycosylation. Polar residues-rich tracts occupy residues 185–198 and 256–265; these read TAVT…STTA and NVTSPSNTRI. Residues 185 to 299 are disordered; sequence TAVTHSTPWS…PGTAASGSVA (115 aa). Residue Asn-256 is glycosylated (N-linked (GlcNAc...) asparagine). The span at 275–299 shows a compositional bias: low complexity; sequence DDGTLLTTKSSPNRPPGTAASGSVA. N-linked (GlcNAc...) asparagine glycosylation is found at Asn-301, Asn-340, Asn-397, Asn-641, Asn-689, and Asn-716. Residues 375–399 are disordered; it reads YDEYDDDASSTTPAPSGGDCLHNSS. One can recognise a GAIN-B domain in the interval 564–740; sequence KKSKIYSSVV…AILMDVVDEH (177 aa). 2 disulfides stabilise this stretch: Cys-695-Cys-722 and Cys-710-Cys-724. Residues 695-740 are GPS; that stretch reads CVFWNYIDHAWSANGCSLESTNRTHSVCSCNHLTNFAILMDVVDEH. The helical transmembrane segment at 754–774 threads the bilayer; sequence IFIYISIGICVVFIVIALLTL. Residues 775–787 lie on the Cytoplasmic side of the membrane; the sequence is KLFNGVFVKSART. The helical transmembrane segment at 788–808 threads the bilayer; sequence SIYTSIYLCLLAIELLFLLGI. Residues 809-814 lie on the Extracellular side of the membrane; it reads EQTETS. Residues 815-835 traverse the membrane as a helical segment; sequence IFCGFITIFLHCAILSGTAWF. Residues 836–861 lie on the Cytoplasmic side of the membrane; it reads CYEAFHSYSTLTSDELLLEVDQTPKV. Residues 862 to 882 form a helical membrane-spanning segment; that stretch reads NCYYLLSYGLSLSVVAISLVI. The Extracellular portion of the chain corresponds to 883–906; the sequence is DPSTYTQNDYCVLMEANALFYATF. Residues 907–927 traverse the membrane as a helical segment; the sequence is VVPVLVFFVAAIGYTFLSWII. Residues 928 to 954 are Cytoplasmic-facing; it reads MCRKSRTGLKTKEHTRLASVRFDIRCS. A helical membrane pass occupies residues 955 to 975; sequence FVFLLLLSAVWCSAYFYLRGA. The Extracellular portion of the chain corresponds to 976 to 985; sequence KMDDDTADVY. A helical transmembrane segment spans residues 986–1006; the sequence is GYCFICFNTLLGLYIFVFHCI. The Cytoplasmic segment spans residues 1007-1693; the sequence is QNEKIRREYR…VRCYLEPLAK (687 aa). The residue at position 1142 (Ser-1142) is a Phosphoserine. Disordered stretches follow at residues 1156–1194, 1220–1247, 1294–1319, 1433–1521, and 1601–1673; these read HKQQ…LKTP, KPNS…LHSR, QQQL…AEQH, GGGS…SDER, and LAVN…QQRH. 2 positions are modified to phosphoserine: Ser-1239 and Ser-1246. Over residues 1294–1309 the composition is skewed to low complexity; it reads QQQLRRQQLHQQQQQL. Residues Ser-1310 and Ser-1311 each carry the phosphoserine modification. Residues 1439–1464 show a composition bias toward low complexity; sequence GGSVSSRSQQQQLKKQQQQQSLAQQR. 2 stretches are compositionally biased toward acidic residues: residues 1472 to 1486 and 1496 to 1507; these read DDDD…EEAT and CDEDEEEDESDL. Residues 1508–1521 are compositionally biased toward basic and acidic residues; the sequence is EHDAHGLPPQSDER. The span at 1630–1655 shows a compositional bias: low complexity; the sequence is LQKLSPQSTTSSSSHTSHSNPNLHPH. Residues 1656–1672 show a composition bias toward basic residues; that stretch reads QLTHPHPHQHPPHHQQR.

This sequence belongs to the G-protein coupled receptor 2 family. LN-TM7 subfamily. As to quaternary structure, forms a heterodimer, consisting of a large extracellular region non-covalently linked to a seven-transmembrane moiety. In terms of processing, proteolytically cleaved into 2 subunits, an extracellular subunit and a seven-transmembrane subunit.

It is found in the cell membrane. The sequence is that of Latrophilin Cirl from Drosophila sechellia (Fruit fly).